A 62-amino-acid polypeptide reads, in one-letter code: Sperm protamine P1 (62 aa).

A disordered region spans residues 1–62; the sequence is MARYRRHSRS…RRYSRRRRRY (62 aa).

Belongs to the protamine P1 family. As to expression, testis.

It localises to the nucleus. It is found in the chromosome. Functionally, protamines substitute for histones in the chromatin of sperm during the haploid phase of spermatogenesis. They compact sperm DNA into a highly condensed, stable and inactive complex. The chain is Sperm protamine P1 (PRM1) from Sminthopsis longicaudata (Long-tailed dunnart).